Consider the following 206-residue polypeptide: Large ribosomal subunit protein eL13 (206 aa).

The segment covering 184–193 (EKTNQKWDGK) has biased composition (basic and acidic residues). A disordered region spans residues 184–206 (EKTNQKWDGKRKAKAQAAAEPKA).

It belongs to the eukaryotic ribosomal protein eL13 family.

The sequence is that of Large ribosomal subunit protein eL13 (RPL13) from Tetrahymena thermophila (strain SB210).